The primary structure comprises 264 residues: Methionine aminopeptidase (264 aa).

His-79 serves as a coordination point for substrate. Asp-97, Asp-108, and His-171 together coordinate a divalent metal cation. His-178 is a substrate binding site. Residues Glu-204 and Glu-235 each coordinate a divalent metal cation.

It belongs to the peptidase M24A family. Methionine aminopeptidase type 1 subfamily. Monomer. The cofactor is Co(2+). It depends on Zn(2+) as a cofactor. Mn(2+) is required as a cofactor. Fe(2+) serves as cofactor.

It catalyses the reaction Release of N-terminal amino acids, preferentially methionine, from peptides and arylamides.. Its function is as follows. Removes the N-terminal methionine from nascent proteins. The N-terminal methionine is often cleaved when the second residue in the primary sequence is small and uncharged (Met-Ala-, Cys, Gly, Pro, Ser, Thr, or Val). Requires deformylation of the N(alpha)-formylated initiator methionine before it can be hydrolyzed. The protein is Methionine aminopeptidase of Buchnera aphidicola subsp. Acyrthosiphon pisum (strain APS) (Acyrthosiphon pisum symbiotic bacterium).